A 184-amino-acid chain; its full sequence is ATP synthase subunit b, chloroplastic (184 aa).

A helical membrane pass occupies residues 27 to 49 (LATNPINLSVVLGVLIFFGKGVL).

This sequence belongs to the ATPase B chain family. As to quaternary structure, F-type ATPases have 2 components, F(1) - the catalytic core - and F(0) - the membrane proton channel. F(1) has five subunits: alpha(3), beta(3), gamma(1), delta(1), epsilon(1). F(0) has four main subunits: a(1), b(1), b'(1) and c(10-14). The alpha and beta chains form an alternating ring which encloses part of the gamma chain. F(1) is attached to F(0) by a central stalk formed by the gamma and epsilon chains, while a peripheral stalk is formed by the delta, b and b' chains.

The protein localises to the plastid. Its subcellular location is the chloroplast thylakoid membrane. In terms of biological role, f(1)F(0) ATP synthase produces ATP from ADP in the presence of a proton or sodium gradient. F-type ATPases consist of two structural domains, F(1) containing the extramembraneous catalytic core and F(0) containing the membrane proton channel, linked together by a central stalk and a peripheral stalk. During catalysis, ATP synthesis in the catalytic domain of F(1) is coupled via a rotary mechanism of the central stalk subunits to proton translocation. Functionally, component of the F(0) channel, it forms part of the peripheral stalk, linking F(1) to F(0). This is ATP synthase subunit b, chloroplastic from Pelargonium hortorum (Common geranium).